The chain runs to 375 residues: Superinfection exclusion protein (375 aa).

The N-terminal stretch at 1–15 (MIALLILSLACSVSA) is a signal peptide.

Belongs to the serpin family. Orthopoxvirus OPG040 subfamily. Interacts with OPG185/A56 protein.

It localises to the virion membrane. Its subcellular location is the host cell membrane. Functionally, negatively regulates superinfection and syncytium formation in infected host cells. Acts in concert with OPG185/A56 protein at the host cell membrane by interacting with and inhibiting the mature virion entry/fusion complex (EFC). This mechanism ensures that new virions released from the cell cannot enter already infected cells. The protein is Superinfection exclusion protein (OPG040) of Cynomys gunnisoni (Gunnison's prairie dog).